The primary structure comprises 170 residues: Large ribosomal subunit protein uL11 (170 aa).

The protein belongs to the universal ribosomal protein uL11 family. As to quaternary structure, part of the ribosomal stalk of the 50S ribosomal subunit. Interacts with L10 and the large rRNA to form the base of the stalk. L10 forms an elongated spine to which L12 dimers bind in a sequential fashion forming a multimeric L10(L12)X complex.

Functionally, forms part of the ribosomal stalk which helps the ribosome interact with GTP-bound translation factors. The polypeptide is Large ribosomal subunit protein uL11 (Saccharolobus solfataricus (strain ATCC 35092 / DSM 1617 / JCM 11322 / P2) (Sulfolobus solfataricus)).